Here is a 331-residue protein sequence, read N- to C-terminus: Thioredoxin-like fold domain-containing protein MRL7, chloroplastic (331 aa).

The N-terminal 59 residues, 1 to 59 (MSFFAVACSAPRSSMLLTGLNSSFSDMHRSPLFVFPVTISSRSVKRFAAVSSDSVLDPE), are a transit peptide targeting the chloroplast. Disordered stretches follow at residues 52 to 105 (SDSV…ADAV) and 141 to 160 (GVDE…EDPD). The segment covering 142–160 (VDEEEEEEEEMVVEEEDPD) has biased composition (acidic residues).

Component of the transcriptionally active chromosome (TAC) complexes. Interacts with FSD2 and PRDA1. Interacts with FSD3 and CITRX/TRXZ. Binds to PTAC12/HMR/PAP5. Expressed in leaves, shoots, stems, cauline leaves, flower buds, flowers and siliques.

The protein resides in the plastid. It localises to the chloroplast. The protein localises to the chloroplast stroma. Its subcellular location is the chloroplast nucleoid. It is found in the nucleus. Plays an essential role in early steps of chloroplast development. Involved in the regulation of plastid gene expression. May positively regulate plastid-encoded RNA polymerase (PEP) activity through binding to FSD3 and CITRX/TRXZ. Involved in redox-mediated regulation of chloroplast development. Possesses disulfide reductase activity in vitro. Required for the proper function of the plastid transcriptional machinery and protein accumulation in thylakoid membranes. May function as molecular chaperone to ensure proper organization of the nucleoids in chloroplasts. May mediate some aspect of thylakoid structure or function that controls non-photochemical quenching (NPQ). Participates in the early light signaling events of photobody biogenesis in chloroplasts. May mediate the degradation of two repressors of chloroplast biogenesis, PIF1 and PIF3 in nucleus. Collaboratively with PTAC12/HMR/PAP5, involved in the regulation of thermoresponsive responses via the stabilization of PIF4 in the daytime to initiate thermomorphogenesis. The protein is Thioredoxin-like fold domain-containing protein MRL7, chloroplastic of Arabidopsis thaliana (Mouse-ear cress).